We begin with the raw amino-acid sequence, 334 residues long: E3 ubiquitin-protein ligase ATL4 (334 aa).

The tract at residues 1–20 (MESLINPSHGGGNYDSHSSS) is disordered. Residues 28-48 (VLVIILILLMTLLISVSICFL) traverse the membrane as a helical segment. Residues 117–159 (CAVCLSKFEPEDQLRLLPLCCHAFHADCIDIWLVSNQTCPLCR) form an RING-type; atypical zinc finger.

It belongs to the RING-type zinc finger family. ATL subfamily.

It is found in the membrane. It carries out the reaction S-ubiquitinyl-[E2 ubiquitin-conjugating enzyme]-L-cysteine + [acceptor protein]-L-lysine = [E2 ubiquitin-conjugating enzyme]-L-cysteine + N(6)-ubiquitinyl-[acceptor protein]-L-lysine.. The protein operates within protein modification; protein ubiquitination. Functionally, E3 ubiquitin-protein ligase able to catalyze polyubiquitination with ubiquitin-conjugating enzyme E2 UBC8 in vitro. In Arabidopsis thaliana (Mouse-ear cress), this protein is E3 ubiquitin-protein ligase ATL4.